Here is a 159-residue protein sequence, read N- to C-terminus: MSDEEHQFESKADAGASKTYPQQAGTIRKSGYIVIKGRPCKVVEVSTSKTGKHGHAKCHFVAIDIFTGKKLEDIVPSSHNCDVPHVNRTDYQLIDISEDGFVSLLTDNGNTKDDLRLPTDDSLLSQIKDGFAEGKDLVVSVMSAMGEEQINALKDIGPK.

Residues 1-12 are compositionally biased toward basic and acidic residues; sequence MSDEEHQFESKA. Residues 1–21 are disordered; it reads MSDEEHQFESKADAGASKTYP. Lys-52 is subject to Hypusine.

This sequence belongs to the eIF-5A family. Post-translationally, lys-52 undergoes hypusination, a unique post-translational modification that consists in the addition of a butylamino group from spermidine to lysine side chain, leading to the formation of the unusual amino acid hypusine. eIF-5As are the only known proteins to undergo this modification, which is essential for their function.

Functionally, translation factor that promotes translation elongation and termination, particularly upon ribosome stalling at specific amino acid sequence contexts. Binds between the exit (E) and peptidyl (P) site of the ribosome and promotes rescue of stalled ribosome: specifically required for efficient translation of polyproline-containing peptides as well as other motifs that stall the ribosome. Acts as a ribosome quality control (RQC) cofactor by joining the RQC complex to facilitate peptidyl transfer during CAT tailing step. The protein is Eukaryotic translation initiation factor 5A-4 (EIF5A4) of Solanum tuberosum (Potato).